We begin with the raw amino-acid sequence, 370 residues long: Histidinol-phosphate aminotransferase 1 (370 aa).

Lys222 carries the N6-(pyridoxal phosphate)lysine modification.

Belongs to the class-II pyridoxal-phosphate-dependent aminotransferase family. Histidinol-phosphate aminotransferase subfamily. Homodimer. The cofactor is pyridoxal 5'-phosphate.

The enzyme catalyses L-histidinol phosphate + 2-oxoglutarate = 3-(imidazol-4-yl)-2-oxopropyl phosphate + L-glutamate. It functions in the pathway amino-acid biosynthesis; L-histidine biosynthesis; L-histidine from 5-phospho-alpha-D-ribose 1-diphosphate: step 7/9. The sequence is that of Histidinol-phosphate aminotransferase 1 from Bacillus cereus (strain ATCC 10987 / NRS 248).